Here is a 128-residue protein sequence, read N- to C-terminus: Aspartate 1-decarboxylase (128 aa).

The active-site Schiff-base intermediate with substrate; via pyruvic acid is the serine 25. Serine 25 is subject to Pyruvic acid (Ser). Position 57 (threonine 57) interacts with substrate. Catalysis depends on tyrosine 58, which acts as the Proton donor. 73–75 (GSA) contributes to the substrate binding site.

The protein belongs to the PanD family. In terms of assembly, heterooctamer of four alpha and four beta subunits. It depends on pyruvate as a cofactor. In terms of processing, is synthesized initially as an inactive proenzyme, which is activated by self-cleavage at a specific serine bond to produce a beta-subunit with a hydroxyl group at its C-terminus and an alpha-subunit with a pyruvoyl group at its N-terminus.

It localises to the cytoplasm. It carries out the reaction L-aspartate + H(+) = beta-alanine + CO2. It functions in the pathway cofactor biosynthesis; (R)-pantothenate biosynthesis; beta-alanine from L-aspartate: step 1/1. Functionally, catalyzes the pyruvoyl-dependent decarboxylation of aspartate to produce beta-alanine. This chain is Aspartate 1-decarboxylase, found in Burkholderia mallei (strain NCTC 10247).